Consider the following 683-residue polypeptide: MAAAVAAPLAAGGEEAAATTSVPGSPGLPGRRSAERALEEAVATGTLNLSNRRLKHFPRGAARSYDLSDITQADLSRNRFPEVPEAACQLVSLEGLSLYHNCLRCLNPALGNLTALTYLNLSRNQLSLLPPYICQLPLRVLIVSNNKLGALPPDIGTLGSLRQLDVSSNELQSLPSELCGLSSLRDLNVRRNQLSTLPEELGDLPLVRLDFSCNRVSRIPVSFCRLRHLQVILLDSNPLQSPPAQVCLKGKLHIFKYLSTEAGQRGSALGDLAPSRPPSFSPCPAEDLFPGHRYDGGLDSGFHSVDSGSKRWSGNESTDEFSELSFRISELAREPRGPRERKEDGSADGDPVQIDFIDSHVPGEDEERGTVEEQRPPELSPGAGDRERAPSSRREEPAGEERRRPDTLQLWQERERRQQQQSGAWGAPRKDSLLKPGLRAVVGGAAAVSTQAMHNGSPKSSASQAGAAAGQGAPAPAPASQEPLPIAGPATAPAPRPLGSIQRPNSFLFRSSSQSGSGPSSPDSVLRPRRYPQVPDEKDLMTQLRQVLESRLQRPLPEDLAEALASGVILCQLANQLRPRSVPFIHVPSPAVPKLSALKARKNVESFLEACRKMGVPEADLCSPSDLLQGTARGLRTALEAVKRVGGKALPPLWPPSGLGGFVVFYVVLMLLLYVTYTRLLGS.

A compositionally biased stretch (low complexity) spans M1–A18. Residues M1 to A34 are disordered. LRR repeat units lie at residues A41–S64, L67–L90, S92–L113, T114–L136, L138–L158, G159–L181, S182–L204, L206–L226, and R227–G250. The disordered stretch occupies residues A268–H292. 6 positions are modified to phosphoserine: S279, S281, S304, S307, S309, and S313. Disordered stretches follow at residues F326–P436 and S449–D539. 3 stretches are compositionally biased toward basic and acidic residues: residues E330 to G345, I357 to P376, and G384 to Q418. Phosphoserine occurs at positions 432 and 457. Positions S449 to S460 are enriched in polar residues. Composition is skewed to low complexity over residues S461–Q481 and S511–S524. A phosphoserine mark is found at S511, S513, S517, S521, and S589. The 114-residue stretch at V534–G647 folds into the Calponin-homology (CH) domain. A helical transmembrane segment spans residues L653 to L673.

It is found in the cell membrane. Functionally, accessory protein that regulates signaling by multiple TLRs, acting as a broad-spanning regulator of the innate immune response. In macrophages, binds LPS and promotes proper docking of LPS in lipid raft membrane. May be required for lipid raft maintenance. This Homo sapiens (Human) protein is Leucine-rich repeat and calponin homology domain-containing protein 4.